Here is a 266-residue protein sequence, read N- to C-terminus: Proline-rich protein 23A (266 aa).

Positions 1–18 (MGSRPRSPSAFPAPWWGQ) are enriched in low complexity. Disordered regions lie at residues 1 to 47 (MGSR…SLED) and 197 to 266 (EPCA…LFQE). The span at 227–238 (PSSPLQPLPPSP) shows a compositional bias: pro residues. A compositionally biased stretch (basic residues) spans 255–266 (PPCKARRRLFQE).

It belongs to the PRR23 family.

This Homo sapiens (Human) protein is Proline-rich protein 23A (PRR23A).